A 153-amino-acid chain; its full sequence is Putative transmembrane protein INAFM2 (153 aa).

Residues 1–23 (MKERDAAPAERGKPATYTGDKKA) show a composition bias toward basic and acidic residues. A disordered region spans residues 1 to 24 (MKERDAAPAERGKPATYTGDKKAK). The helical transmembrane segment at 36–56 (LATVFAYVLSVSLAAIVLAVY) threads the bilayer. A disordered region spans residues 66–153 (AGTSGGAAGP…EETAAAPGSR (88 aa)). The segment covering 79–101 (GSNATGPSGTSGAAAAGPNTTGS) has biased composition (low complexity). Positions 118-131 (PAPPEPPADSPPAG) are enriched in pro residues.

It is found in the membrane. This chain is Putative transmembrane protein INAFM2, found in Homo sapiens (Human).